A 325-amino-acid chain; its full sequence is Small ribosomal subunit protein uS3 (325 aa).

In terms of domain architecture, KH type-2 spans 38 to 106 (IRKMMSKGME…QVQLNILEVK (69 aa)). The segment at 217 to 325 (EALLRQQRRE…AQGAPEKAEG (109 aa)) is disordered. Residues 222 to 232 (QQRRERPRRGP) are compositionally biased toward basic residues. Residues 285-316 (TESAAVEGTPVETPAVTPETTAAPAAVTTAEA) are compositionally biased toward low complexity.

Belongs to the universal ribosomal protein uS3 family. In terms of assembly, part of the 30S ribosomal subunit. Forms a tight complex with proteins S10 and S14.

In terms of biological role, binds the lower part of the 30S subunit head. Binds mRNA in the 70S ribosome, positioning it for translation. The protein is Small ribosomal subunit protein uS3 of Parafrankia sp. (strain EAN1pec).